A 430-amino-acid polypeptide reads, in one-letter code: Histidine--tRNA ligase (430 aa).

It belongs to the class-II aminoacyl-tRNA synthetase family. Homodimer.

The protein localises to the cytoplasm. It carries out the reaction tRNA(His) + L-histidine + ATP = L-histidyl-tRNA(His) + AMP + diphosphate + H(+). The sequence is that of Histidine--tRNA ligase from Chlorobium luteolum (strain DSM 273 / BCRC 81028 / 2530) (Pelodictyon luteolum).